We begin with the raw amino-acid sequence, 367 residues long: 3-dehydroquinate synthase (367 aa).

NAD(+) is bound by residues 112 to 116 (GVIGD), 136 to 137 (TT), K149, K158, and 176 to 179 (TLKT). Zn(2+) is bound by residues E191, H256, and H273.

Belongs to the sugar phosphate cyclases superfamily. Dehydroquinate synthase family. Requires NAD(+) as cofactor. Co(2+) is required as a cofactor. Zn(2+) serves as cofactor.

It localises to the cytoplasm. It catalyses the reaction 7-phospho-2-dehydro-3-deoxy-D-arabino-heptonate = 3-dehydroquinate + phosphate. It functions in the pathway metabolic intermediate biosynthesis; chorismate biosynthesis; chorismate from D-erythrose 4-phosphate and phosphoenolpyruvate: step 2/7. Catalyzes the conversion of 3-deoxy-D-arabino-heptulosonate 7-phosphate (DAHP) to dehydroquinate (DHQ). The sequence is that of 3-dehydroquinate synthase from Prochlorococcus marinus (strain SARG / CCMP1375 / SS120).